The chain runs to 502 residues: ATP synthase subunit alpha (502 aa).

A disordered region spans residues 115-136; sequence VDGLGPIHTTKTRPIESPAPGV. 169–176 contributes to the ATP binding site; sequence GDRQTGKT.

It belongs to the ATPase alpha/beta chains family. In terms of assembly, F-type ATPases have 2 components, CF(1) - the catalytic core - and CF(0) - the membrane proton channel. CF(1) has five subunits: alpha(3), beta(3), gamma(1), delta(1), epsilon(1). CF(0) has three main subunits: a(1), b(2) and c(9-12). The alpha and beta chains form an alternating ring which encloses part of the gamma chain. CF(1) is attached to CF(0) by a central stalk formed by the gamma and epsilon chains, while a peripheral stalk is formed by the delta and b chains.

Its subcellular location is the cell membrane. It carries out the reaction ATP + H2O + 4 H(+)(in) = ADP + phosphate + 5 H(+)(out). In terms of biological role, produces ATP from ADP in the presence of a proton gradient across the membrane. The alpha chain is a regulatory subunit. The polypeptide is ATP synthase subunit alpha (Bacillus cytotoxicus (strain DSM 22905 / CIP 110041 / 391-98 / NVH 391-98)).